The following is a 379-amino-acid chain: Fucose-specific lectin g276 (379 aa).

E126 is an alpha-L-fucose binding site. Beta-L-fucose-binding residues include E126, R163, and W185. 3 residues coordinate alpha-L-fucose: W185, R222, and E234. Residues W242 and E282 each coordinate beta-L-fucose. W289 serves as a coordination point for alpha-L-fucose.

The protein belongs to the fungal fucose-specific lectin family.

Functionally, lectin that specifically binds to L-fucose. Is associated with the morphogenesis of the fungus, and plays a role in the formation of the constricting rings involved in nematode-trapping. The protein is Fucose-specific lectin g276 of Arthrobotrys oligospora (strain ATCC 24927 / CBS 115.81 / DSM 1491) (Nematode-trapping fungus).